Consider the following 427-residue polypeptide: 3-phosphoshikimate 1-carboxyvinyltransferase (427 aa).

Residues lysine 22, serine 23, and arginine 27 each contribute to the 3-phosphoshikimate site. Phosphoenolpyruvate is bound at residue lysine 22. Glycine 96 and arginine 124 together coordinate phosphoenolpyruvate. Positions 169, 170, 171, 197, 313, 336, and 340 each coordinate 3-phosphoshikimate. Position 171 (glutamine 171) interacts with phosphoenolpyruvate. The Proton acceptor role is filled by aspartate 313. 3 residues coordinate phosphoenolpyruvate: arginine 344, arginine 386, and lysine 411.

The protein belongs to the EPSP synthase family. In terms of assembly, monomer.

It localises to the cytoplasm. The enzyme catalyses 3-phosphoshikimate + phosphoenolpyruvate = 5-O-(1-carboxyvinyl)-3-phosphoshikimate + phosphate. Its pathway is metabolic intermediate biosynthesis; chorismate biosynthesis; chorismate from D-erythrose 4-phosphate and phosphoenolpyruvate: step 6/7. In terms of biological role, catalyzes the transfer of the enolpyruvyl moiety of phosphoenolpyruvate (PEP) to the 5-hydroxyl of shikimate-3-phosphate (S3P) to produce enolpyruvyl shikimate-3-phosphate and inorganic phosphate. In Escherichia coli O9:H4 (strain HS), this protein is 3-phosphoshikimate 1-carboxyvinyltransferase.